A 78-amino-acid chain; its full sequence is Small ribosomal subunit protein bS20 (78 aa).

It belongs to the bacterial ribosomal protein bS20 family.

Binds directly to 16S ribosomal RNA. The protein is Small ribosomal subunit protein bS20 of Streptococcus thermophilus (strain ATCC BAA-491 / LMD-9).